A 465-amino-acid polypeptide reads, in one-letter code: Neutrophil collagenase (465 aa).

The signal sequence occupies residues 1–20 (MFRLKTLPLLIFLHTQLANA). A propeptide spans 21 to 100 (FPVPEHLEEK…CGVPDSGDFL (80 aa)) (activation peptide). Asn55 carries N-linked (GlcNAc...) asparagine glycosylation. Residues 89–96 (PRCGVPDS) carry the Cysteine switch motif. Cys91 contacts Zn(2+). Asn112 is a glycosylation site (N-linked (GlcNAc...) asparagine). Ca(2+) is bound at residue Asp157. Residues His167 and Asp169 each coordinate Zn(2+). 4 residues coordinate Ca(2+): Asp174, Gly175, Asn177, and Ile179. His182 is a binding site for Zn(2+). 3 residues coordinate Ca(2+): Gly189, Gly191, and Asp193. His195 is a binding site for Zn(2+). Ca(2+) is bound by residues Asp197 and Glu200. Position 217 (His217) interacts with Zn(2+). Residue Glu218 is part of the active site. Zn(2+)-binding residues include His221 and His227. Hemopexin repeat units lie at residues 276–325 (PKAC…WPFL), 326–372 (PNGL…GFPR), 374–420 (VQAI…FPGV), and 421–464 (NCRV…WLNC). The cysteines at positions 279 and 464 are disulfide-linked. Asp286 serves as a coordination point for Ca(2+). Ca(2+)-binding residues include Asp378 and Asp425.

It belongs to the peptidase M10A family. Ca(2+) is required as a cofactor. The cofactor is Zn(2+). In terms of tissue distribution, neutrophils. Expressed in uterus. Low levels in kidney and muscle.

It is found in the cytoplasmic granule. The protein resides in the secreted. It localises to the extracellular space. Its subcellular location is the extracellular matrix. The catalysed reaction is Cleavage of interstitial collagens in the triple helical domain. Unlike EC 3.4.24.7, this enzyme cleaves type III collagen more slowly than type I.. Cannot be activated without removal of the activation peptide. Activated by matrilysin. Functionally, can degrade fibrillar type I, II, and III collagens. May play a role in the degradation of collagen fibers during uterine involution. This is Neutrophil collagenase (Mmp8) from Mus musculus (Mouse).